Reading from the N-terminus, the 132-residue chain is uncharacterized protein (132 aa).

A helical transmembrane segment spans residues 105-125 (VHGYVVFWLSILCILIIIFVY).

It is found in the membrane. This is an uncharacterized protein from Methanocaldococcus jannaschii (strain ATCC 43067 / DSM 2661 / JAL-1 / JCM 10045 / NBRC 100440) (Methanococcus jannaschii).